Consider the following 481-residue polypeptide: 4-hydroxyphenylacetate 3-monooxygenase oxygenase component (481 aa).

Substrate contacts are provided by residues Arg100–Tyr104 and His142. FAD contacts are provided by residues His142–Leu144, Gln148–Arg151, and Thr185. Ser197–Thr198 contributes to the substrate binding site. Asp444–Arg447 is an FAD binding site.

The protein belongs to the FADH(2)-utilizing monooxygenase family. In terms of assembly, homotetramer consisting of a dimer of dimers. 4-HPA 3-monooxygenase consists of a reductase component HpaC and an oxygenase component HpaB.

It catalyses the reaction 4-hydroxyphenylacetate + FADH2 + O2 = 3,4-dihydroxyphenylacetate + FAD + H2O + H(+). The protein operates within aromatic compound metabolism; 4-hydroxyphenylacetate degradation; pyruvate and succinate semialdehyde from 4-hydroxyphenylacetate: step 1/7. Utilizes FADH(2) supplied by HpaC, to catalyze the hydroxylation of 4-hydroxyphenylacetic acid, leading to the production of 3,4-dihydroxyphenylacetic acid (DHPA). The protein is 4-hydroxyphenylacetate 3-monooxygenase oxygenase component of Thermus thermophilus (strain ATCC 27634 / DSM 579 / HB8).